The following is a 283-amino-acid chain: 4-diphosphocytidyl-2-C-methyl-D-erythritol kinase (283 aa).

K10 is a catalytic residue. Residue P99–S109 coordinates ATP. The active site involves D141.

The protein belongs to the GHMP kinase family. IspE subfamily. As to quaternary structure, homodimer.

The enzyme catalyses 4-CDP-2-C-methyl-D-erythritol + ATP = 4-CDP-2-C-methyl-D-erythritol 2-phosphate + ADP + H(+). Its pathway is isoprenoid biosynthesis; isopentenyl diphosphate biosynthesis via DXP pathway; isopentenyl diphosphate from 1-deoxy-D-xylulose 5-phosphate: step 3/6. Catalyzes the phosphorylation of the position 2 hydroxy group of 4-diphosphocytidyl-2C-methyl-D-erythritol. In Salmonella choleraesuis (strain SC-B67), this protein is 4-diphosphocytidyl-2-C-methyl-D-erythritol kinase.